A 405-amino-acid chain; its full sequence is Phosphoglycerate kinase (405 aa).

Substrate contacts are provided by residues 21 to 23, Arg-38, 59 to 62, Arg-116, and Arg-156; these read DFN and HQSR. ATP-binding positions include Glu-330 and 355–358; that span reads GGHT.

This sequence belongs to the phosphoglycerate kinase family. In terms of assembly, monomer.

The protein localises to the cytoplasm. The enzyme catalyses (2R)-3-phosphoglycerate + ATP = (2R)-3-phospho-glyceroyl phosphate + ADP. It functions in the pathway carbohydrate degradation; glycolysis; pyruvate from D-glyceraldehyde 3-phosphate: step 2/5. This Methanocorpusculum labreanum (strain ATCC 43576 / DSM 4855 / Z) protein is Phosphoglycerate kinase.